Reading from the N-terminus, the 149-residue chain is Transcriptional repressor NrdR (149 aa).

A zinc finger spans residues 3-34 (CPFCFAVDTKVIDSRLVGEGSSVRRRRQCLVC). The ATP-cone domain occupies 49-139 (PRVVKSNDVR…VYRSFEDIKE (91 aa)).

This sequence belongs to the NrdR family. Zn(2+) serves as cofactor.

Negatively regulates transcription of bacterial ribonucleotide reductase nrd genes and operons by binding to NrdR-boxes. The protein is Transcriptional repressor NrdR of Klebsiella pneumoniae (strain 342).